A 206-amino-acid chain; its full sequence is Ras-related protein Rab-7a (206 aa).

15–22 (GDSGVGKT) contributes to the GTP binding site. Phosphoserine is present on residues Ser-17 and Ser-23. Residues Thr-34, Thr-40, and Thr-64 each carry the phosphothreonine modification. Residues 34–40 (TQQYRAT) and 63–67 (DTAGQ) each bind GTP. Residues 37 to 45 (YRATVGADF) carry the Effector region motif. Ser-72 carries the phosphoserine modification. Phosphotyrosine occurs at positions 78 and 88. GTP contacts are provided by residues 125 to 128 (NKLD) and 157 to 158 (AK). 2 S-geranylgeranyl cysteine lipidation sites follow: Cys-205 and Cys-206.

The protein belongs to the small GTPase superfamily. Rab family.

The protein localises to the cytoplasmic vesicle. It is found in the phagosome membrane. The protein resides in the late endosome membrane. Its subcellular location is the lysosome membrane. It localises to the autophagosome membrane. The protein localises to the lipid droplet. It carries out the reaction GTP + H2O = GDP + phosphate + H(+). In terms of biological role, small GTPase which cycles between active GTP-bound and inactive GDP-bound states. In its active state, binds to a variety of effector proteins playing a key role in the regulation of endo-lysosomal trafficking. Governs early-to-late endosomal maturation, microtubule minus-end as well as plus-end directed endosomal migration and positioning, and endosome-lysosome transport through different protein-protein interaction cascades. Involved in lipophagy, a cytosolic lipase-independent autophagic pathway. Plays a role in phagocyte formation and acidification. This is Ras-related protein Rab-7a from Paramecium octaurelia.